We begin with the raw amino-acid sequence, 217 residues long: 7-cyano-7-deazaguanine synthase (217 aa).

Residue 10–20 (FSGGQDSTTCL) participates in ATP binding. Zn(2+) contacts are provided by Cys185, Cys194, Cys197, and Cys200.

It belongs to the QueC family. As to quaternary structure, homodimer. Zn(2+) serves as cofactor.

The catalysed reaction is 7-carboxy-7-deazaguanine + NH4(+) + ATP = 7-cyano-7-deazaguanine + ADP + phosphate + H2O + H(+). It functions in the pathway purine metabolism; 7-cyano-7-deazaguanine biosynthesis. Functionally, catalyzes the ATP-dependent conversion of 7-carboxy-7-deazaguanine (CDG) to 7-cyano-7-deazaguanine (preQ(0)). The chain is 7-cyano-7-deazaguanine synthase from Streptococcus thermophilus (strain CNRZ 1066).